The sequence spans 709 residues: UvrABC system protein B (709 aa).

The region spanning 35–416 (ERVEAGEKDV…YELGQADGYV (382 aa)) is the Helicase ATP-binding domain. ATP is bound at residue 48–55 (GATGTGKS). The short motif at 101–124 (YYDYYQPEAYVPQTDTFIEKDSSI) is the Beta-hairpin element. Positions 438 to 604 (QIDDLLEQIR…PLRKRIADIT (167 aa)) constitute a Helicase C-terminal domain. The 36-residue stretch at 666 to 701 (ADLIEQMSQQMHQAAADLQFELAARLRDEVGELKKE) folds into the UVR domain.

The protein belongs to the UvrB family. In terms of assembly, forms a heterotetramer with UvrA during the search for lesions. Interacts with UvrC in an incision complex.

It localises to the cytoplasm. The UvrABC repair system catalyzes the recognition and processing of DNA lesions. A damage recognition complex composed of 2 UvrA and 2 UvrB subunits scans DNA for abnormalities. Upon binding of the UvrA(2)B(2) complex to a putative damaged site, the DNA wraps around one UvrB monomer. DNA wrap is dependent on ATP binding by UvrB and probably causes local melting of the DNA helix, facilitating insertion of UvrB beta-hairpin between the DNA strands. Then UvrB probes one DNA strand for the presence of a lesion. If a lesion is found the UvrA subunits dissociate and the UvrB-DNA preincision complex is formed. This complex is subsequently bound by UvrC and the second UvrB is released. If no lesion is found, the DNA wraps around the other UvrB subunit that will check the other stand for damage. This chain is UvrABC system protein B, found in Micrococcus luteus (strain ATCC 4698 / DSM 20030 / JCM 1464 / CCM 169 / CCUG 5858 / IAM 1056 / NBRC 3333 / NCIMB 9278 / NCTC 2665 / VKM Ac-2230) (Micrococcus lysodeikticus).